Reading from the N-terminus, the 251-residue chain is Appressoria-specific virulence factor GAS1 (251 aa).

The N-terminal stretch at 1–21 (MSLKSLIAATILAAPLVAGHG) is a signal peptide. A disordered region spans residues 40–76 (VTSTPRDGTRRDPFQQDSTRFKGQQADTFGETVGGGQ). Residues 54-66 (QQDSTRFKGQQAD) are compositionally biased toward polar residues.

It localises to the cytoplasm. Appressoria-specific virulence factor required for appressorial penetration in host and lesion development. The protein is Appressoria-specific virulence factor GAS1 of Pyricularia oryzae (strain 70-15 / ATCC MYA-4617 / FGSC 8958) (Rice blast fungus).